A 43-amino-acid chain; its full sequence is Protein PsbN (43 aa).

A helical transmembrane segment spans residues 7-27 (LIIFIASLLLGLTGYSIYTAF).

The protein belongs to the PsbN family.

Its subcellular location is the plastid. The protein localises to the chloroplast thylakoid membrane. In terms of biological role, may play a role in photosystem I and II biogenesis. The protein is Protein PsbN of Guillardia theta (Cryptophyte).